Here is a 443-residue protein sequence, read N- to C-terminus: Phosphoglucosamine mutase (443 aa).

Residue Ser103 is the Phosphoserine intermediate of the active site. Positions 103, 244, 246, and 248 each coordinate Mg(2+). Ser103 bears the Phosphoserine mark.

Belongs to the phosphohexose mutase family. Mg(2+) is required as a cofactor. Activated by phosphorylation.

The enzyme catalyses alpha-D-glucosamine 1-phosphate = D-glucosamine 6-phosphate. Catalyzes the conversion of glucosamine-6-phosphate to glucosamine-1-phosphate. The protein is Phosphoglucosamine mutase of Pelagibacter ubique (strain HTCC1062).